A 274-amino-acid chain; its full sequence is tRNA-cytidine(32) 2-sulfurtransferase (274 aa).

The PP-loop motif motif lies at 40-45 (SGGKDS). Residues Cys-115, Cys-118, and Cys-206 each contribute to the [4Fe-4S] cluster site.

It belongs to the TtcA family. Homodimer. Mg(2+) is required as a cofactor. [4Fe-4S] cluster serves as cofactor.

It localises to the cytoplasm. It carries out the reaction cytidine(32) in tRNA + S-sulfanyl-L-cysteinyl-[cysteine desulfurase] + AH2 + ATP = 2-thiocytidine(32) in tRNA + L-cysteinyl-[cysteine desulfurase] + A + AMP + diphosphate + H(+). It participates in tRNA modification. Its function is as follows. Catalyzes the ATP-dependent 2-thiolation of cytidine in position 32 of tRNA, to form 2-thiocytidine (s(2)C32). The sulfur atoms are provided by the cysteine/cysteine desulfurase (IscS) system. This is tRNA-cytidine(32) 2-sulfurtransferase from Pseudomonas syringae pv. syringae (strain B728a).